A 434-amino-acid chain; its full sequence is Putative D-alanyl-D-alanine carboxypeptidase (434 aa).

A helical; Signal-anchor membrane pass occupies residues 7–25 (YLSLLAVSCSVSAAKYPVL).

It belongs to the peptidase S12 family. YfeW subfamily.

Its subcellular location is the cell inner membrane. The catalysed reaction is Preferential cleavage: (Ac)2-L-Lys-D-Ala-|-D-Ala. Also transpeptidation of peptidyl-alanyl moieties that are N-acyl substituents of D-alanine.. The sequence is that of Putative D-alanyl-D-alanine carboxypeptidase from Escherichia coli O157:H7.